The following is a 221-amino-acid chain: Large ribosomal subunit protein uL3 (221 aa).

The tract at residues histidine 131–glycine 165 is disordered.

It belongs to the universal ribosomal protein uL3 family. Part of the 50S ribosomal subunit. Forms a cluster with proteins L14 and L19.

Its function is as follows. One of the primary rRNA binding proteins, it binds directly near the 3'-end of the 23S rRNA, where it nucleates assembly of the 50S subunit. This Phytoplasma australiense protein is Large ribosomal subunit protein uL3.